We begin with the raw amino-acid sequence, 140 residues long: 3-hydroxyacyl-[acyl-carrier-protein] dehydratase FabZ (140 aa).

The active site involves H47.

The protein belongs to the thioester dehydratase family. FabZ subfamily.

The protein resides in the cytoplasm. It catalyses the reaction a (3R)-hydroxyacyl-[ACP] = a (2E)-enoyl-[ACP] + H2O. Involved in unsaturated fatty acids biosynthesis. Catalyzes the dehydration of short chain beta-hydroxyacyl-ACPs and long chain saturated and unsaturated beta-hydroxyacyl-ACPs. The chain is 3-hydroxyacyl-[acyl-carrier-protein] dehydratase FabZ from Streptococcus mutans serotype c (strain ATCC 700610 / UA159).